The sequence spans 399 residues: Chorismate synthase (399 aa).

2 residues coordinate NADP(+): arginine 40 and arginine 46. Residues 134 to 136 (RAS), 255 to 256 (QA), glycine 299, 314 to 318 (KPIST), and arginine 340 contribute to the FMN site.

The protein belongs to the chorismate synthase family. Homotetramer. It depends on FMNH2 as a cofactor.

It catalyses the reaction 5-O-(1-carboxyvinyl)-3-phosphoshikimate = chorismate + phosphate. It functions in the pathway metabolic intermediate biosynthesis; chorismate biosynthesis; chorismate from D-erythrose 4-phosphate and phosphoenolpyruvate: step 7/7. Catalyzes the anti-1,4-elimination of the C-3 phosphate and the C-6 proR hydrogen from 5-enolpyruvylshikimate-3-phosphate (EPSP) to yield chorismate, which is the branch point compound that serves as the starting substrate for the three terminal pathways of aromatic amino acid biosynthesis. This reaction introduces a second double bond into the aromatic ring system. This chain is Chorismate synthase, found in Mycolicibacterium smegmatis (strain ATCC 700084 / mc(2)155) (Mycobacterium smegmatis).